The sequence spans 440 residues: Xylose isomerase (440 aa).

Active-site residues include His100 and Asp103. Mg(2+)-binding residues include Glu231, Glu267, His270, Asp295, Asp306, Asp308, and Asp338.

Belongs to the xylose isomerase family. Homotetramer. It depends on Mg(2+) as a cofactor.

The protein resides in the cytoplasm. The enzyme catalyses alpha-D-xylose = alpha-D-xylulofuranose. This chain is Xylose isomerase, found in Burkholderia thailandensis (strain ATCC 700388 / DSM 13276 / CCUG 48851 / CIP 106301 / E264).